The primary structure comprises 69 residues: Putative transmembrane protein ORF34 (69 aa).

Helical transmembrane passes span 7 to 27 (LLSV…MMQF) and 42 to 62 (VSLM…IVYF).

The protein resides in the host membrane. The polypeptide is Putative transmembrane protein ORF34 (Haloarcula hispanica (His1V)).